Consider the following 461-residue polypeptide: uncharacterized protein (461 aa).

2 helical membrane passes run 18–38 (IITWLLVILPFPILGTLFLIY) and 124–144 (FIFLEYFIIAEGLMWGEILSI). 2 PLD phosphodiesterase domains span residues 197–224 (YNYRDHRKILVIDNKVAFNGGINLADEY) and 374–401 (TPGFVHAKVFIADDIKAVVGTINLDYRS).

This sequence belongs to the phospholipase D family. Cardiolipin synthase subfamily.

The protein localises to the cell membrane. This is an uncharacterized protein from Streptococcus mutans serotype c (strain ATCC 700610 / UA159).